Here is a 465-residue protein sequence, read N- to C-terminus: uncharacterized protein (465 aa).

11 helical membrane passes run 19–39 (VLGP…GEYM), 50–70 (MIAG…VAMI), 91–111 (IVGP…YTML), 140–160 (FIVL…LATL), 164–184 (LVIT…VQFG), 201–221 (PYGW…YLGI), 244–264 (AGIM…SGLM), 288–308 (LMVL…NGCI), 342–362 (IVFL…DQVV), 363–383 (TFSI…MVMF), and 403–423 (LPTV…FLGY).

This sequence belongs to the amino acid-polyamine-organocation (APC) superfamily.

It localises to the cell membrane. Functionally, probable amino-acid or metabolite transport protein. This is an uncharacterized protein from Rhizobium meliloti (strain 1021) (Ensifer meliloti).